The chain runs to 210 residues: Glutathione S-transferase P 2 (210 aa).

In terms of domain architecture, GST N-terminal spans 1 to 82 (SGYTLTYFPL…LLARYGLSGS (82 aa)). Residues Tyr7, Arg13, Trp38, Lys46, 53–54 (QI), and 66–67 (QS) contribute to the glutathione site. A GST C-terminal domain is found at 83 to 204 (NEREIAINEM…KSEGRKRRPI (122 aa)).

The protein belongs to the GST superfamily. Pi family. Homodimer. As to expression, liver, kidney, muscle, skin, lung and ovary.

The enzyme catalyses RX + glutathione = an S-substituted glutathione + a halide anion + H(+). Its function is as follows. Conjugation of reduced glutathione to a wide number of exogenous and endogenous hydrophobic electrophiles. The polypeptide is Glutathione S-transferase P 2 (Bufo bufo (European toad)).